The sequence spans 732 residues: E3 ubiquitin-protein ligase TRIM56 (732 aa).

The RING-type zinc-finger motif lies at 21 to 60; sequence CKICLEQLRVPKTLPCLHTYCQDCLAQLAEGSRLRCPECR. The segment at 164 to 205 adopts a B box-type zinc-finger fold; that stretch reads RQAAQCPQHPGEALRFLCQPCSQLLCRECRLDPHLDHPCLPL. Positions 169, 172, 192, and 197 each coordinate Zn(2+). Residues 211–286 are a coiled coil; it reads ARRPGLEELL…LRAHVEAAEE (76 aa). A compositionally biased stretch (basic and acidic residues) spans 374-384; the sequence is LPQKDSGKDGA. The tract at residues 374-462 is disordered; sequence LPQKDSGKDG…PAPGPNLEGS (89 aa). Over residues 389–405 the composition is skewed to polar residues; the sequence is GDATQPQSRDGVQTPNQ. A Phosphothreonine modification is found at Thr402. The span at 407-416 shows a compositional bias: basic and acidic residues; it reads DGAKTPKESR. The residue at position 419 (Thr419) is a Phosphothreonine. Basic residues predominate over residues 434–446; the sequence is SNKKRKFKGRLKS. Ser452 is modified (phosphoserine).

It belongs to the TRIM/RBCC family. Interacts with STING1. Interacts with TICAM1.

The protein resides in the cytoplasm. It catalyses the reaction S-ubiquitinyl-[E2 ubiquitin-conjugating enzyme]-L-cysteine + [acceptor protein]-L-lysine = [E2 ubiquitin-conjugating enzyme]-L-cysteine + N(6)-ubiquitinyl-[acceptor protein]-L-lysine.. It functions in the pathway protein modification; protein ubiquitination. In terms of biological role, E3 ubiquitin-protein ligase that plays a key role in innate antiviral immunity by mediating ubiquitination of CGAS and STING1. In response to pathogen- and host-derived double-stranded DNA (dsDNA), targets STING1 to 'Lys-63'-linked ubiquitination, thereby promoting its homodimerization, a step required for the production of type I interferon IFN-beta. Also mediate monoubiquitination of CGAS, thereby promoting CGAS oligomerization and subsequent activation. Independently of its E3 ubiquitin ligase activity, positive regulator of TLR3 signaling. Potentiates extracellular double stranded RNA (dsRNA)-induced expression of IFNB1 and interferon-stimulated genes ISG15, IFIT1/ISG56, CXCL10, OASL and CCL5/RANTES. Restricts bovine viral diarrhea virus (BVDV) replication. The sequence is that of E3 ubiquitin-protein ligase TRIM56 from Bos taurus (Bovine).